A 107-amino-acid polypeptide reads, in one-letter code: MSITLSDTAAARVNAFLANRGKGFGLRLGVRTSGCSGMAYVLEFVDAPQPEDTVFEDKGVKVVVDGKSLQFLNGTQLDFVKEGLNEGFKFTNPNVKDECGCGESFNV.

Residues cysteine 35, cysteine 99, and cysteine 101 each coordinate Fe cation.

Belongs to the HesB/IscA family. As to quaternary structure, homodimer; may form tetramers and higher multimers. Fe cation serves as cofactor.

In terms of biological role, is able to transfer iron-sulfur clusters to apo-ferredoxin. Multiple cycles of [2Fe2S] cluster formation and transfer are observed, suggesting that IscA acts catalytically. Recruits intracellular free iron so as to provide iron for the assembly of transient iron-sulfur cluster in IscU in the presence of IscS, L-cysteine and the thioredoxin reductase system TrxA/TrxB. This is Iron-binding protein IscA from Cronobacter sakazakii (strain ATCC BAA-894) (Enterobacter sakazakii).